The sequence spans 122 residues: MIQQESRLKVADNSGAREVLVIKVLGGSGRRYANIGDVVVATVKEATPGGVVKKGQVVKAVVVRTKRGVRRSDGSYIRFDENACVIIRDDKSPRGTRIFGPVARELRDKDFMKIISLAPEVI.

It belongs to the universal ribosomal protein uL14 family. In terms of assembly, part of the 50S ribosomal subunit. Forms a cluster with proteins L3 and L19. In the 70S ribosome, L14 and L19 interact and together make contacts with the 16S rRNA in bridges B5 and B8.

Functionally, binds to 23S rRNA. Forms part of two intersubunit bridges in the 70S ribosome. The chain is Large ribosomal subunit protein uL14 from Geobacillus sp. (strain WCH70).